The following is a 132-amino-acid chain: Ribosome-binding factor A (132 aa).

Positions 113 to 132 (EANSTRAKDDDEADTPAKDD) are disordered.

This sequence belongs to the RbfA family. Monomer. Binds 30S ribosomal subunits, but not 50S ribosomal subunits or 70S ribosomes.

It localises to the cytoplasm. Its function is as follows. One of several proteins that assist in the late maturation steps of the functional core of the 30S ribosomal subunit. Associates with free 30S ribosomal subunits (but not with 30S subunits that are part of 70S ribosomes or polysomes). Required for efficient processing of 16S rRNA. May interact with the 5'-terminal helix region of 16S rRNA. This Burkholderia cenocepacia (strain HI2424) protein is Ribosome-binding factor A.